Consider the following 520-residue polypeptide: Sterile alpha motif domain-containing protein 3 (520 aa).

The 68-residue stretch at 4-71 (WSVEQVCSWL…KYKQNTQGLK (68 aa)) folds into the SAM domain. The disordered stretch occupies residues 85–114 (TEAARDYRDEESSSPARHGEQMPSFYPAEN).

This chain is Sterile alpha motif domain-containing protein 3 (SAMD3), found in Homo sapiens (Human).